The following is a 517-amino-acid chain: 2-isopropylmalate synthase (517 aa).

The region spanning 5–268 (IIIFDTTLRD…DTRINTQEIH (264 aa)) is the Pyruvate carboxyltransferase domain. Residues Asp14, His202, His204, and Asn238 each contribute to the Mn(2+) site. The interval 393-517 (SLDVITSQTI…ADLKSHKISQ (125 aa)) is regulatory domain.

It belongs to the alpha-IPM synthase/homocitrate synthase family. LeuA type 1 subfamily. In terms of assembly, homodimer. Requires Mn(2+) as cofactor.

The protein resides in the cytoplasm. The enzyme catalyses 3-methyl-2-oxobutanoate + acetyl-CoA + H2O = (2S)-2-isopropylmalate + CoA + H(+). It participates in amino-acid biosynthesis; L-leucine biosynthesis; L-leucine from 3-methyl-2-oxobutanoate: step 1/4. Functionally, catalyzes the condensation of the acetyl group of acetyl-CoA with 3-methyl-2-oxobutanoate (2-ketoisovalerate) to form 3-carboxy-3-hydroxy-4-methylpentanoate (2-isopropylmalate). This is 2-isopropylmalate synthase from Histophilus somni (strain 2336) (Haemophilus somnus).